Reading from the N-terminus, the 450-residue chain is UDP-N-acetylmuramoylalanine--D-glutamate ligase (450 aa).

ATP is bound at residue 119–125; the sequence is GSNGKTT.

The protein belongs to the MurCDEF family.

The protein localises to the cytoplasm. It carries out the reaction UDP-N-acetyl-alpha-D-muramoyl-L-alanine + D-glutamate + ATP = UDP-N-acetyl-alpha-D-muramoyl-L-alanyl-D-glutamate + ADP + phosphate + H(+). Its pathway is cell wall biogenesis; peptidoglycan biosynthesis. Functionally, cell wall formation. Catalyzes the addition of glutamate to the nucleotide precursor UDP-N-acetylmuramoyl-L-alanine (UMA). In Streptococcus thermophilus (strain ATCC BAA-491 / LMD-9), this protein is UDP-N-acetylmuramoylalanine--D-glutamate ligase.